The following is a 503-amino-acid chain: Aspartyl/glutamyl-tRNA(Asn/Gln) amidotransferase subunit B (503 aa).

This sequence belongs to the GatB/GatE family. GatB subfamily. In terms of assembly, heterotrimer of A, B and C subunits.

The enzyme catalyses L-glutamyl-tRNA(Gln) + L-glutamine + ATP + H2O = L-glutaminyl-tRNA(Gln) + L-glutamate + ADP + phosphate + H(+). It catalyses the reaction L-aspartyl-tRNA(Asn) + L-glutamine + ATP + H2O = L-asparaginyl-tRNA(Asn) + L-glutamate + ADP + phosphate + 2 H(+). Its function is as follows. Allows the formation of correctly charged Asn-tRNA(Asn) or Gln-tRNA(Gln) through the transamidation of misacylated Asp-tRNA(Asn) or Glu-tRNA(Gln) in organisms which lack either or both of asparaginyl-tRNA or glutaminyl-tRNA synthetases. The reaction takes place in the presence of glutamine and ATP through an activated phospho-Asp-tRNA(Asn) or phospho-Glu-tRNA(Gln). This chain is Aspartyl/glutamyl-tRNA(Asn/Gln) amidotransferase subunit B, found in Cereibacter sphaeroides (strain ATCC 17023 / DSM 158 / JCM 6121 / CCUG 31486 / LMG 2827 / NBRC 12203 / NCIMB 8253 / ATH 2.4.1.) (Rhodobacter sphaeroides).